The sequence spans 472 residues: Ribosomal protein uS12 methylthiotransferase RimO (472 aa).

Residues 33–143 (NRIGFVSLGC…VLKHVHKYVP (111 aa)) enclose the MTTase N-terminal domain. Residues Cys-42, Cys-78, Cys-107, Cys-175, Cys-179, and Cys-182 each contribute to the [4Fe-4S] cluster site. The Radical SAM core domain maps to 161–398 (LTPKHYAYLK…MEVQAEISAE (238 aa)). The TRAM domain maps to 401–467 (ARFVGRTLDI…EHDLWAEVVD (67 aa)).

It belongs to the methylthiotransferase family. RimO subfamily. The cofactor is [4Fe-4S] cluster.

The protein resides in the cytoplasm. The catalysed reaction is L-aspartate(89)-[ribosomal protein uS12]-hydrogen + (sulfur carrier)-SH + AH2 + 2 S-adenosyl-L-methionine = 3-methylsulfanyl-L-aspartate(89)-[ribosomal protein uS12]-hydrogen + (sulfur carrier)-H + 5'-deoxyadenosine + L-methionine + A + S-adenosyl-L-homocysteine + 2 H(+). Functionally, catalyzes the methylthiolation of an aspartic acid residue of ribosomal protein uS12. In Shewanella baltica (strain OS185), this protein is Ribosomal protein uS12 methylthiotransferase RimO.